The primary structure comprises 123 residues: Large ribosomal subunit protein uL14 (123 aa).

Belongs to the universal ribosomal protein uL14 family. Part of the 50S ribosomal subunit. Forms a cluster with proteins L3 and L19. In the 70S ribosome, L14 and L19 interact and together make contacts with the 16S rRNA in bridges B5 and B8.

In terms of biological role, binds to 23S rRNA. Forms part of two intersubunit bridges in the 70S ribosome. This is Large ribosomal subunit protein uL14 from Zymomonas mobilis subsp. mobilis (strain ATCC 31821 / ZM4 / CP4).